The sequence spans 565 residues: Urocanate hydratase (565 aa).

NAD(+)-binding positions include 61 to 62 (GG), Gln139, 185 to 187 (GMG), Glu205, Arg210, 251 to 252 (NA), 272 to 276 (QTSAH), 282 to 283 (YL), and Tyr331. Cys419 is a catalytic residue. The segment at 453–472 (LDSGSVASPNRETESMRDGS) is disordered. Residues 463–472 (RETESMRDGS) are compositionally biased toward basic and acidic residues. Residue Gly501 participates in NAD(+) binding.

This sequence belongs to the urocanase family. It depends on NAD(+) as a cofactor.

The protein resides in the cytoplasm. The catalysed reaction is 4-imidazolone-5-propanoate = trans-urocanate + H2O. The protein operates within amino-acid degradation; L-histidine degradation into L-glutamate; N-formimidoyl-L-glutamate from L-histidine: step 2/3. Functionally, catalyzes the conversion of urocanate to 4-imidazolone-5-propionate. The protein is Urocanate hydratase of Pseudomonas syringae pv. syringae (strain B728a).